Here is a 465-residue protein sequence, read N- to C-terminus: Cysteine--tRNA ligase (465 aa).

Cys-29 provides a ligand contact to Zn(2+). The short motif at 31 to 41 is the 'HIGH' region element; that stretch reads PTVYNYIHIGN. Zn(2+) is bound by residues Cys-209, His-234, and Glu-238. Residues 266 to 270 carry the 'KMSKS' region motif; the sequence is KMSKS. Lys-269 lines the ATP pocket. Ser-270 is modified (phosphoserine).

It belongs to the class-I aminoacyl-tRNA synthetase family. In terms of assembly, monomer. It depends on Zn(2+) as a cofactor.

It is found in the cytoplasm. It carries out the reaction tRNA(Cys) + L-cysteine + ATP = L-cysteinyl-tRNA(Cys) + AMP + diphosphate. In Bacillus cytotoxicus (strain DSM 22905 / CIP 110041 / 391-98 / NVH 391-98), this protein is Cysteine--tRNA ligase.